A 49-amino-acid polypeptide reads, in one-letter code: Large ribosomal subunit protein bL33A (49 aa).

It belongs to the bacterial ribosomal protein bL33 family.

The protein is Large ribosomal subunit protein bL33A of Bacillus licheniformis (strain ATCC 14580 / DSM 13 / JCM 2505 / CCUG 7422 / NBRC 12200 / NCIMB 9375 / NCTC 10341 / NRRL NRS-1264 / Gibson 46).